A 379-amino-acid polypeptide reads, in one-letter code: Cytochrome b (379 aa).

4 helical membrane-spanning segments follow: residues 34–54 (LGSL…FLTM), 78–99 (WLIR…YLHV), 114–134 (WMTG…GYVL), and 179–199 (FYTF…IHLF). The heme b site is built by His-84 and His-98. Heme b contacts are provided by His-183 and His-197. Residue His-202 participates in a ubiquinone binding. 4 consecutive transmembrane segments (helical) span residues 227–247 (YKDM…CLID), 289–309 (LGGV…PFYN), 321–341 (MNQI…WIGK), and 348–368 (YIMT…FNVH).

The protein belongs to the cytochrome b family. The main subunits of complex b-c1 are: cytochrome b, cytochrome c1 and the Rieske protein. It depends on heme b as a cofactor.

The protein localises to the mitochondrion inner membrane. In terms of biological role, component of the ubiquinol-cytochrome c reductase complex (complex III or cytochrome b-c1 complex) that is part of the mitochondrial respiratory chain. The b-c1 complex mediates electron transfer from ubiquinol to cytochrome c. Contributes to the generation of a proton gradient across the mitochondrial membrane that is then used for ATP synthesis. This chain is Cytochrome b (MT-CYB), found in Locusta migratoria (Migratory locust).